The chain runs to 308 residues: Ribosomal protein L11 methyltransferase (308 aa).

S-adenosyl-L-methionine contacts are provided by threonine 148, glycine 169, aspartate 191, and asparagine 239.

Belongs to the methyltransferase superfamily. PrmA family.

The protein resides in the cytoplasm. The catalysed reaction is L-lysyl-[protein] + 3 S-adenosyl-L-methionine = N(6),N(6),N(6)-trimethyl-L-lysyl-[protein] + 3 S-adenosyl-L-homocysteine + 3 H(+). In terms of biological role, methylates ribosomal protein L11. The polypeptide is Ribosomal protein L11 methyltransferase (Psychrobacter cryohalolentis (strain ATCC BAA-1226 / DSM 17306 / VKM B-2378 / K5)).